A 396-amino-acid chain; its full sequence is Chalcone synthase B (396 aa).

C170 is a catalytic residue.

It belongs to the thiolase-like superfamily. Chalcone/stilbene synthases family.

The enzyme catalyses (E)-4-coumaroyl-CoA + 3 malonyl-CoA + 3 H(+) = 2',4,4',6'-tetrahydroxychalcone + 3 CO2 + 4 CoA. Its pathway is secondary metabolite biosynthesis; flavonoid biosynthesis. Functionally, the primary product of this enzyme is 4,2',4',6'-tetrahydroxychalcone (also termed naringenin-chalcone or chalcone) which can under specific conditions spontaneously isomerize into naringenin. The chain is Chalcone synthase B (CHSB) from Ipomoea purpurea (Common morning glory).